We begin with the raw amino-acid sequence, 1107 residues long: Probable chromatin-remodeling complex ATPase chain (1107 aa).

Disordered regions lie at residues 1–124 (MAKP…KREK) and 177–217 (GNQS…GSGG). Composition is skewed to acidic residues over residues 8 to 25 (DEEEEEVSSSGEEEEEQS), 33 to 43 (GEEEDEEEEEA), 53 to 65 (GGEEEEVDEEEIE), and 89 to 114 (EGDEESQSTEDDEAVVGEDDDADEAE). The stretch at 121 to 147 (KREKARLKEMQKLKKQKIQEILDTQNA) forms a coiled coil. The segment covering 183–193 (KKPRGRGRHAS) has biased composition (basic residues). Residues 197 to 211 (EEEEDEEYLKEEEDA) are compositionally biased toward acidic residues. The Helicase ATP-binding domain occupies 243-408 (IRLYENGING…WSLLNFLLPE (166 aa)). ATP is bound at residue 256–263 (DEMGLGKT). The DEAH box motif lies at 359 to 362 (DEAH). In terms of domain architecture, Helicase C-terminal spans 536–687 (LLDKLLPKLK…ALVIQQGRLA (152 aa)). 2 consecutive SANT domains span residues 877–929 (EGFA…ERYK) and 978–1039 (QNKG…DTLI). A coiled-coil region spans residues 1029–1067 (QELARRCDTLIRLVEKENQEYDEQERQARKDKRMAKNMT). The interval 1049–1107 (YDEQERQARKDKRMAKNMTPTKRSALRVSEGETTPSNSFKRRRQSLMDDYVGSGRRKRG) is disordered.

Belongs to the SNF2/RAD54 helicase family. ISWI subfamily.

Its subcellular location is the nucleus. In terms of biological role, possesses intrinsic ATP-dependent nucleosome-remodeling activity. Constitutes the catalytic subunit of several complexes capable of forming ordered nucleosome arrays on chromatin in vitro. In Oryza sativa subsp. japonica (Rice), this protein is Probable chromatin-remodeling complex ATPase chain.